A 524-amino-acid chain; its full sequence is Serine/threonine-protein kinase PAK 2 (524 aa).

Residues 1-81 (MSDNGELEDK…PEISPPSDFE (81 aa)) are disordered. S2 is modified (N-acetylserine). S2, S20, S55, and S58 each carry phosphoserine. T60 carries the phosphothreonine modification. K62 carries the post-translational modification N6-acetyllysine. Residue S64 is modified to Phosphoserine. Over residues 67 to 81 (KEKERPEISPPSDFE) the composition is skewed to basic and acidic residues. The tract at residues 69 to 112 (KERPEISPPSDFEHTIHVGFDAVTGEFTGMPEQWARLLQTSNIT) is GTPase-binding. Residues 69-137 (KERPEISPPS…KFYDSNTVKQ (69 aa)) form an autoregulatory region region. Residues 74–87 (ISPPSDFEHTIHVG) enclose the CRIB domain. An N6-acetyllysine modification is found at K128. At T134 the chain carries Phosphothreonine. A Phosphotyrosine modification is found at Y139. S141 carries the post-translational modification Phosphoserine. The residue at position 143 (T143) is a Phosphothreonine. Disordered regions lie at residues 143–164 (TPPEKDGFPSGTPALNAKGTEA) and 169–188 (TEEEDDDEETAPPVIAPRPD). A Phosphoserine modification is found at S152. 2 positions are modified to phosphothreonine: T154 and T169. The span at 169 to 178 (TEEEDDDEET) shows a compositional bias: acidic residues. A Phosphoserine modification is found at S197. Residue G213 is the site of N-myristoyl glycine; in form PAK-2p34 attachment. The Nuclear localization signal motif lies at 245 to 251 (PKKKYTR). A Protein kinase domain is found at 249-499 (YTRYEKIGQG…SAKELLQHPF (251 aa)). ATP is bound by residues 255-263 (IGQGASGTV) and K278. R367 serves as the catalytic Proton acceptor. At T402 the chain carries Phosphothreonine; by autocatalysis.

The protein belongs to the protein kinase superfamily. STE Ser/Thr protein kinase family. STE20 subfamily. As to quaternary structure, interacts tightly with GTP-bound but not GDP-bound CDC42/p21 and RAC1. Interacts with SH3MD4. Interacts with SCRIB. Interacts with ARHGEF7 and GIT1. PAK-2p34 interacts with ARHGAP10. In terms of assembly, (Microbial infection) Interacts with and activated by HIV-1 Nef. In terms of processing, full-length PAK2 is autophosphorylated when activated by CDC42/p21. Following cleavage, both peptides, PAK-2p27 and PAK-2p34, become highly autophosphorylated, with PAK-2p27 being phosphorylated on serine and PAK-2p34 on threonine residues, respectively. Autophosphorylation of PAK-2p27 can occur in the absence of any effectors and is dependent on phosphorylation of Thr-402, because PAK-2p27 is acting as an exogenous substrate. During apoptosis proteolytically cleaved by caspase-3 or caspase-3-like proteases to yield active PAK-2p34. Post-translationally, ubiquitinated, leading to its proteasomal degradation. In terms of processing, PAK-2p34 is myristoylated. In terms of tissue distribution, ubiquitously expressed. Higher levels seen in skeletal muscle, ovary, thymus and spleen.

It is found in the cytoplasm. Its subcellular location is the nucleus. It localises to the perinuclear region. The protein resides in the membrane. The enzyme catalyses L-seryl-[protein] + ATP = O-phospho-L-seryl-[protein] + ADP + H(+). The catalysed reaction is L-threonyl-[protein] + ATP = O-phospho-L-threonyl-[protein] + ADP + H(+). Activated by binding small G proteins. Binding of GTP-bound CDC42 or RAC1 to the autoregulatory region releases monomers from the autoinhibited dimer, enables phosphorylation of Thr-402 and allows the kinase domain to adopt an active structure. Following caspase cleavage, autophosphorylated PAK-2p34 is constitutively active. Functionally, serine/threonine protein kinase that plays a role in a variety of different signaling pathways including cytoskeleton regulation, cell motility, cell cycle progression, apoptosis or proliferation. Acts as a downstream effector of the small GTPases CDC42 and RAC1. Activation by the binding of active CDC42 and RAC1 results in a conformational change and a subsequent autophosphorylation on several serine and/or threonine residues. Full-length PAK2 stimulates cell survival and cell growth. Phosphorylates MAPK4 and MAPK6 and activates the downstream target MAPKAPK5, a regulator of F-actin polymerization and cell migration. Phosphorylates JUN and plays an important role in EGF-induced cell proliferation. Phosphorylates many other substrates including histone H4 to promote assembly of H3.3 and H4 into nucleosomes, BAD, ribosomal protein S6, or MBP. Phosphorylates CASP7, thereby preventing its activity. Additionally, associates with ARHGEF7 and GIT1 to perform kinase-independent functions such as spindle orientation control during mitosis. On the other hand, apoptotic stimuli such as DNA damage lead to caspase-mediated cleavage of PAK2, generating PAK-2p34, an active p34 fragment that translocates to the nucleus and promotes cellular apoptosis involving the JNK signaling pathway. Caspase-activated PAK2 phosphorylates MKNK1 and reduces cellular translation. This is Serine/threonine-protein kinase PAK 2 (PAK2) from Homo sapiens (Human).